Consider the following 179-residue polypeptide: Inner membrane-spanning protein YciB (179 aa).

5 consecutive transmembrane segments (helical) span residues 22–42 (IYVA…FTWF), 50–70 (MTLI…VFHN), 76–96 (WKVT…QLVL), 121–141 (LAWA…AFWL), and 149–169 (FKVF…GVYI).

The protein belongs to the YciB family.

It localises to the cell inner membrane. Plays a role in cell envelope biogenesis, maintenance of cell envelope integrity and membrane homeostasis. In Serratia proteamaculans (strain 568), this protein is Inner membrane-spanning protein YciB.